The sequence spans 912 residues: Translation initiation factor IF-2 (912 aa).

Residues 185–204 form a disordered region; sequence NATRPKRKTKEEKQKEREER. The span at 193 to 204 shows a compositional bias: basic and acidic residues; it reads TKEEKQKEREER. In terms of domain architecture, tr-type G spans 411–581; that stretch reads LRPPIVTIMG…LLEAELLDLK (171 aa). The segment at 420 to 427 is G1; the sequence is GHVDHGKT. 420–427 contacts GTP; the sequence is GHVDHGKT. Residues 445-449 form a G2 region; sequence GITQH. Residues 467 to 470 are G3; sequence DTPG. GTP is bound by residues 467 to 471 and 521 to 524; these read DTPGH and NKID. Positions 521–524 are G4; it reads NKID. Positions 557 to 559 are G5; it reads SAK.

It belongs to the TRAFAC class translation factor GTPase superfamily. Classic translation factor GTPase family. IF-2 subfamily.

The protein localises to the cytoplasm. In terms of biological role, one of the essential components for the initiation of protein synthesis. Protects formylmethionyl-tRNA from spontaneous hydrolysis and promotes its binding to the 30S ribosomal subunits. Also involved in the hydrolysis of GTP during the formation of the 70S ribosomal complex. In Azobacteroides pseudotrichonymphae genomovar. CFP2, this protein is Translation initiation factor IF-2.